Reading from the N-terminus, the 91-residue chain is Uteroglobin (91 aa).

The N-terminal stretch at 1 to 21 (MKLTITLALVTLALLCSPASA) is a signal peptide.

The protein belongs to the secretoglobin family. In terms of assembly, antiparallel homodimer; disulfide-linked. Interaction with LMBR1L is controversial.

The protein resides in the secreted. Functionally, uteroglobin binds progesterone specifically and with high affinity. It may regulate progesterone concentrations reaching the blastocyst. It is also a potent inhibitor of phospholipase A2. In Lepus capensis (Brown hare), this protein is Uteroglobin (SCGB1A1).